A 126-amino-acid chain; its full sequence is Large ribosomal subunit protein bL12 (126 aa).

It belongs to the bacterial ribosomal protein bL12 family. In terms of assembly, homodimer. Part of the ribosomal stalk of the 50S ribosomal subunit. Forms a multimeric L10(L12)X complex, where L10 forms an elongated spine to which 2 to 4 L12 dimers bind in a sequential fashion. Binds GTP-bound translation factors.

Forms part of the ribosomal stalk which helps the ribosome interact with GTP-bound translation factors. Is thus essential for accurate translation. The chain is Large ribosomal subunit protein bL12 from Saccharophagus degradans (strain 2-40 / ATCC 43961 / DSM 17024).